A 725-amino-acid polypeptide reads, in one-letter code: Methionine--tRNA ligase (725 aa).

A 'HIGH' region motif is present at residues 27–37; it reads PYANGQIHIGH. Zn(2+) is bound by residues C158, C161, C171, and C174. The 'KMSKS' region signature appears at 348–352; the sequence is KMSKS. Residue K351 participates in ATP binding. Positions 619–725 constitute a tRNA-binding domain; sequence DFAKIDLRIA…SGAKPGMRVK (107 aa).

The protein belongs to the class-I aminoacyl-tRNA synthetase family. MetG type 1 subfamily. As to quaternary structure, homodimer. Zn(2+) is required as a cofactor.

The protein localises to the cytoplasm. It catalyses the reaction tRNA(Met) + L-methionine + ATP = L-methionyl-tRNA(Met) + AMP + diphosphate. Functionally, is required not only for elongation of protein synthesis but also for the initiation of all mRNA translation through initiator tRNA(fMet) aminoacylation. The protein is Methionine--tRNA ligase of Burkholderia pseudomallei (strain 1106a).